The following is a 505-amino-acid chain: Histidine ammonia-lyase (505 aa).

Positions 141-143 form a cross-link, 5-imidazolinone (Ala-Gly); the sequence is ASG. The residue at position 142 (Ser142) is a 2,3-didehydroalanine (Ser).

The protein belongs to the PAL/histidase family. Contains an active site 4-methylidene-imidazol-5-one (MIO), which is formed autocatalytically by cyclization and dehydration of residues Ala-Ser-Gly.

It localises to the cytoplasm. The catalysed reaction is L-histidine = trans-urocanate + NH4(+). The protein operates within amino-acid degradation; L-histidine degradation into L-glutamate; N-formimidoyl-L-glutamate from L-histidine: step 1/3. This Bacillus cytotoxicus (strain DSM 22905 / CIP 110041 / 391-98 / NVH 391-98) protein is Histidine ammonia-lyase.